The following is a 465-amino-acid chain: Ribulose bisphosphate carboxylase large chain (465 aa).

Lys-4 carries the N6,N6,N6-trimethyllysine modification. 2 residues coordinate substrate: Asn-113 and Thr-163. The active-site Proton acceptor is Lys-165. Substrate is bound at residue Lys-167. 3 residues coordinate Mg(2+): Lys-191, Asp-193, and Glu-194. Lys-191 bears the N6-carboxylysine mark. The Proton acceptor role is filled by His-284. Substrate contacts are provided by Arg-285, His-317, and Ser-369.

The protein belongs to the RuBisCO large chain family. Type I subfamily. Heterohexadecamer of 8 large chains and 8 small chains; disulfide-linked. The disulfide link is formed within the large subunit homodimers. It depends on Mg(2+) as a cofactor. The disulfide bond which can form in the large chain dimeric partners within the hexadecamer appears to be associated with oxidative stress and protein turnover.

Its subcellular location is the plastid. The protein localises to the chloroplast. The enzyme catalyses 2 (2R)-3-phosphoglycerate + 2 H(+) = D-ribulose 1,5-bisphosphate + CO2 + H2O. It catalyses the reaction D-ribulose 1,5-bisphosphate + O2 = 2-phosphoglycolate + (2R)-3-phosphoglycerate + 2 H(+). In terms of biological role, ruBisCO catalyzes two reactions: the carboxylation of D-ribulose 1,5-bisphosphate, the primary event in carbon dioxide fixation, as well as the oxidative fragmentation of the pentose substrate in the photorespiration process. Both reactions occur simultaneously and in competition at the same active site. The chain is Ribulose bisphosphate carboxylase large chain from Fragaria ananassa (Strawberry).